Here is a 151-residue protein sequence, read N- to C-terminus: Ribosomal RNA large subunit methyltransferase H (151 aa).

Residues leucine 70, glycine 99, and 118-123 contribute to the S-adenosyl-L-methionine site; that span reads LSKLTF.

Belongs to the RNA methyltransferase RlmH family. Homodimer.

Its subcellular location is the cytoplasm. The enzyme catalyses pseudouridine(1915) in 23S rRNA + S-adenosyl-L-methionine = N(3)-methylpseudouridine(1915) in 23S rRNA + S-adenosyl-L-homocysteine + H(+). In terms of biological role, specifically methylates the pseudouridine at position 1915 (m3Psi1915) in 23S rRNA. The chain is Ribosomal RNA large subunit methyltransferase H from Gloeobacter violaceus (strain ATCC 29082 / PCC 7421).